A 108-amino-acid chain; its full sequence is Large ribosomal subunit protein eL36x (108 aa).

Disordered regions lie at residues 13–34 and 75–108; these read GHVV…KTSK and KLGT…EKKK. The span at 75-84 shows a compositional bias: basic residues; the sequence is KLGTHKRAKR.

Belongs to the eukaryotic ribosomal protein eL36 family.

This is Large ribosomal subunit protein eL36x (RPL36C) from Arabidopsis thaliana (Mouse-ear cress).